The chain runs to 132 residues: Small ribosomal subunit protein uS8c (132 aa).

Belongs to the universal ribosomal protein uS8 family. Part of the 30S ribosomal subunit.

It is found in the plastid. The protein resides in the chloroplast. In terms of biological role, one of the primary rRNA binding proteins, it binds directly to 16S rRNA central domain where it helps coordinate assembly of the platform of the 30S subunit. The sequence is that of Small ribosomal subunit protein uS8c (rps8) from Cycas taitungensis (Prince sago).